Reading from the N-terminus, the 233-residue chain is Cell surface glycoprotein gp42 (233 aa).

The first 16 residues, 1 to 16 (MLLWMVLLLCVSMTEA), serve as a signal peptide directing secretion. Ig-like domains lie at 23-98 (PVLS…GTIQ) and 115-195 (PVLT…RDIS). N29, N66, and N181 each carry an N-linked (GlcNAc...) asparagine glycan. 2 disulfide bridges follow: C40/C88 and C136/C184. A lipid anchor (GPI-anchor amidated glycine) is attached at G206. Residues 207–233 (TASMKSTTVVIWLPVSCLVGWPWLLRF) constitute a propeptide, removed in mature form.

In terms of tissue distribution, NK cells.

It localises to the cell membrane. The chain is Cell surface glycoprotein gp42 from Rattus norvegicus (Rat).